Consider the following 546-residue polypeptide: Probable Xaa-Pro aminopeptidase pepP (546 aa).

4 residues coordinate Mn(2+): aspartate 341, aspartate 352, glutamate 475, and glutamate 515.

Belongs to the peptidase M24B family. Mn(2+) serves as cofactor.

The enzyme catalyses Release of any N-terminal amino acid, including proline, that is linked to proline, even from a dipeptide or tripeptide.. Catalyzes the removal of a penultimate prolyl residue from the N-termini of peptides. The polypeptide is Probable Xaa-Pro aminopeptidase pepP (pepP) (Sclerotinia sclerotiorum (strain ATCC 18683 / 1980 / Ss-1) (White mold)).